Consider the following 630-residue polypeptide: Chaperone protein DnaK (630 aa).

Phosphothreonine; by autocatalysis is present on Thr-198. The tract at residues 604–630 is disordered; sequence AAAAPGEEAPKDDDVVDAEFSEVDDKK. Positions 617-630 are enriched in acidic residues; sequence DVVDAEFSEVDDKK.

The protein belongs to the heat shock protein 70 family.

Acts as a chaperone. This is Chaperone protein DnaK from Rhizorhabdus wittichii (strain DSM 6014 / CCUG 31198 / JCM 15750 / NBRC 105917 / EY 4224 / RW1) (Sphingomonas wittichii).